Reading from the N-terminus, the 426-residue chain is UPF0761 membrane protein Nmul_A0452 (426 aa).

6 helical membrane passes run 48-68 (LLSL…FPAF), 106-126 (LTAI…LTID), 145-165 (LLIY…SLSL), 187-207 (LLRL…YLIV), 217-237 (AIAG…GFAF), and 255-275 (IPIF…GAVI).

The protein belongs to the UPF0761 family.

The protein localises to the cell inner membrane. The protein is UPF0761 membrane protein Nmul_A0452 of Nitrosospira multiformis (strain ATCC 25196 / NCIMB 11849 / C 71).